Reading from the N-terminus, the 232-residue chain is Pseudaminic acid cytidylyltransferase (232 aa).

This sequence belongs to the CMP-NeuNAc synthase family. Mg(2+) is required as a cofactor.

It carries out the reaction pseudaminate + CTP = CMP-pseudaminate + diphosphate. Its function is as follows. Catalyzes the final step in the biosynthesis of pseudaminic acid, a sialic-acid-like sugar that is used to modify flagellin. Mediates the activation of pseudaminic acid with CMP by forming CMP-pseudaminic acid. The chain is Pseudaminic acid cytidylyltransferase (pseF) from Campylobacter jejuni subsp. jejuni serotype O:2 (strain ATCC 700819 / NCTC 11168).